We begin with the raw amino-acid sequence, 459 residues long: tRNA modification GTPase MnmE (459 aa).

The (6S)-5-formyl-5,6,7,8-tetrahydrofolate site is built by Arg22, Glu85, and Arg124. The region spanning 221–380 (GLSTVIVGKP…LEIQIRDLFF (160 aa)) is the TrmE-type G domain. Residue Asn231 participates in K(+) binding. GTP is bound by residues 231-236 (NVGKSS), 250-256 (TEVAGTT), and 275-278 (DTAG). Ser235 contacts Mg(2+). 3 residues coordinate K(+): Thr250, Val252, and Thr255. A Mg(2+)-binding site is contributed by Thr256. Lys459 lines the (6S)-5-formyl-5,6,7,8-tetrahydrofolate pocket.

It belongs to the TRAFAC class TrmE-Era-EngA-EngB-Septin-like GTPase superfamily. TrmE GTPase family. In terms of assembly, homodimer. Heterotetramer of two MnmE and two MnmG subunits. Requires K(+) as cofactor.

It is found in the cytoplasm. Functionally, exhibits a very high intrinsic GTPase hydrolysis rate. Involved in the addition of a carboxymethylaminomethyl (cmnm) group at the wobble position (U34) of certain tRNAs, forming tRNA-cmnm(5)s(2)U34. The protein is tRNA modification GTPase MnmE of Staphylococcus aureus (strain MSSA476).